Consider the following 311-residue polypeptide: Aspartate carbamoyltransferase catalytic subunit (311 aa).

Positions 55 and 56 each coordinate carbamoyl phosphate. L-aspartate is bound at residue Lys85. Carbamoyl phosphate-binding residues include Arg106, His135, and Gln138. Residues Arg168 and Arg230 each contribute to the L-aspartate site. Carbamoyl phosphate-binding residues include Leu268 and Pro269.

Belongs to the aspartate/ornithine carbamoyltransferase superfamily. ATCase family. Heterododecamer (2C3:3R2) of six catalytic PyrB chains organized as two trimers (C3), and six regulatory PyrI chains organized as three dimers (R2).

The enzyme catalyses carbamoyl phosphate + L-aspartate = N-carbamoyl-L-aspartate + phosphate + H(+). It participates in pyrimidine metabolism; UMP biosynthesis via de novo pathway; (S)-dihydroorotate from bicarbonate: step 2/3. Its function is as follows. Catalyzes the condensation of carbamoyl phosphate and aspartate to form carbamoyl aspartate and inorganic phosphate, the committed step in the de novo pyrimidine nucleotide biosynthesis pathway. This is Aspartate carbamoyltransferase catalytic subunit from Proteus mirabilis (strain HI4320).